We begin with the raw amino-acid sequence, 217 residues long: Elongation factor Ts (217 aa).

An involved in Mg(2+) ion dislocation from EF-Tu region spans residues 81–84; sequence TDFV.

Belongs to the EF-Ts family.

It is found in the cytoplasm. Associates with the EF-Tu.GDP complex and induces the exchange of GDP to GTP. It remains bound to the aminoacyl-tRNA.EF-Tu.GTP complex up to the GTP hydrolysis stage on the ribosome. In Myxococcus xanthus (strain DK1622), this protein is Elongation factor Ts.